The sequence spans 142 residues: Large ribosomal subunit protein uL11 (142 aa).

It belongs to the universal ribosomal protein uL11 family. Part of the ribosomal stalk of the 50S ribosomal subunit. Interacts with L10 and the large rRNA to form the base of the stalk. L10 forms an elongated spine to which L12 dimers bind in a sequential fashion forming a multimeric L10(L12)X complex. One or more lysine residues are methylated.

Functionally, forms part of the ribosomal stalk which helps the ribosome interact with GTP-bound translation factors. In Photobacterium profundum (strain SS9), this protein is Large ribosomal subunit protein uL11.